Reading from the N-terminus, the 983-residue chain is Nitrate reductase [NADPH] (983 aa).

Low complexity-rich tracts occupy residues 1-14 (MTISTTSSSTSSKT) and 26-48 (SSSSSPASSRSSSATTPEPSSPT). A disordered region spans residues 1–50 (MTISTTSSSTSSKTSSEKGDDLKGFSSSSSPASSRSSSATTPEPSSPTVL). A Mo-molybdopterin-binding site is contributed by C184. The 78-residue stretch at 585 to 662 (DTIITAADLA…LRDFHLGRLE (78 aa)) folds into the Cytochrome b5 heme-binding domain. 2 residues coordinate heme: H622 and H645. The FAD-binding FR-type domain maps to 688–815 (KKWRATRLVS…KGPLGSFTYL (128 aa)). FAD contacts are provided by residues 746-749 (RAYT), 763-767 (LIKVY), F768, F780, 784-786 (KMT), S841, and T844. Residue 952–961 (LALVCGPPPM) participates in NADP(+) binding.

This sequence belongs to the nitrate reductase family. As to quaternary structure, homodimer. FAD is required as a cofactor. It depends on heme as a cofactor. Mo-molybdopterin serves as cofactor.

The catalysed reaction is nitrite + NADP(+) + H2O = nitrate + NADPH + H(+). Its pathway is nitrogen metabolism; nitrate reduction (assimilation). In terms of biological role, nitrate reductase is a key enzyme involved in the first step of nitrate assimilation in plants, fungi and bacteria. The polypeptide is Nitrate reductase [NADPH] (NAR1) (Mycosarcoma maydis (Corn smut fungus)).